Consider the following 449-residue polypeptide: D-inositol 3-phosphate glycosyltransferase (449 aa).

A 1D-myo-inositol 3-phosphate-binding site is contributed by H43. Residues 49-50 (QP) and G57 each bind UDP-N-acetyl-alpha-D-glucosamine. 1D-myo-inositol 3-phosphate is bound by residues 54–59 (DAGGMN), K112, Y145, T169, and R189. UDP-N-acetyl-alpha-D-glucosamine contacts are provided by R263, K268, and Q324. Positions 333, 334, and 336 each coordinate Mg(2+). UDP-N-acetyl-alpha-D-glucosamine contacts are provided by E346 and E354. T360 provides a ligand contact to Mg(2+).

This sequence belongs to the glycosyltransferase group 1 family. MshA subfamily. As to quaternary structure, homodimer.

It catalyses the reaction 1D-myo-inositol 3-phosphate + UDP-N-acetyl-alpha-D-glucosamine = 1D-myo-inositol 2-acetamido-2-deoxy-alpha-D-glucopyranoside 3-phosphate + UDP + H(+). In terms of biological role, catalyzes the transfer of a N-acetyl-glucosamine moiety to 1D-myo-inositol 3-phosphate to produce 1D-myo-inositol 2-acetamido-2-deoxy-glucopyranoside 3-phosphate in the mycothiol biosynthesis pathway. This Segniliparus rotundus (strain ATCC BAA-972 / CDC 1076 / CIP 108378 / DSM 44985 / JCM 13578) protein is D-inositol 3-phosphate glycosyltransferase.